A 437-amino-acid polypeptide reads, in one-letter code: GTPase Der (437 aa).

EngA-type G domains lie at 3 to 167 (NLVA…NKET) and 176 to 352 (PRFA…ENRT). GTP-binding positions include 9-16 (GRPNVGKS), 56-60 (DTGGW), 119-122 (NKTD), 182-189 (GRPNAGKS), 229-233 (DTAGI), and 294-297 (NKWD). Residues 353-437 (TKIPTARLNE…TPINIYIRQK (85 aa)) form the KH-like domain.

This sequence belongs to the TRAFAC class TrmE-Era-EngA-EngB-Septin-like GTPase superfamily. EngA (Der) GTPase family. Associates with the 50S ribosomal subunit.

In terms of biological role, GTPase that plays an essential role in the late steps of ribosome biogenesis. This chain is GTPase Der, found in Bacteroides thetaiotaomicron (strain ATCC 29148 / DSM 2079 / JCM 5827 / CCUG 10774 / NCTC 10582 / VPI-5482 / E50).